The chain runs to 476 residues: MITSALHRAADWAKSVFSSAALGDPRRTARLVNVAAQLAKYSGKSITISSEGSEAMQEGAYRFIRNPNVSAEAIRKAGAMQTVKLAQEFPELLAIEDTTSLSYRHQVAEELGKLGSIQDKSRGWWVHSVLLLEATTFRTVGLLHQEWWMRPDDPADADEKESGKWLAAAATSRLRMGSMMSNVIAVCDREADIHAYLQDKLAHNERFVVRSKHPRKDVESGLYLYDHLKNQPELGGYQISIPQKGVVDKRGKRKNRPARKASLSLRSGRITLKQGNITLNAVLAEEINPPKGETPLKWLLLTSEPVESLAQALRVIDIYTHRWRIEEFHKAWKTGAGAERQRMEEPDNLERMVSILSFVAVRLLQLRESFTLPQALRAQGLLKEAEHVESQSAETVLTPDECQLLGYLDKGKRKRKEKAGSLQWAYMAIARLGGFMDSKRTGIASWGALWEGWEALQSKLDGFLAAKDLMAQGIKI.

An interaction with DNA region spans residues 1-70; sequence MITSALHRAA…YRFIRNPNVS (70 aa). 2 residues coordinate Mg(2+): Asp-97 and Asp-188. Interaction with DNA stretches follow at residues 237 to 255 and 319 to 348; these read YQISIPQKGVVDKRGKRKN and YTHRWRIEEFHKAWKTGAGAERQRMEEPDN. Residue Glu-326 coordinates Mg(2+). The segment at 369–476 is important for dimerization; sequence SFTLPQALRA…KDLMAQGIKI (108 aa).

This sequence belongs to the transposase 11 family. Monomer. Homodimer of tnp (isoform 1), and heterodimer of tnp (isoform 1) and inh (isoform 2). Mg(2+) is required as a cofactor.

Functionally, mediates transposition of transposon Tn5 by a 'cut and paste' mechanism. First, the monomeric transposase binds the 19 bp inverted DNA repeats flanking the transposon. Then, dimerization of the DNA-bound transposase creates a synaptic DNA complex. After nicking of the first DNA strand, excision of the transposon proceeds through a series of intermediates. The transposase then mediates the insertion of the transposon at a new site by strand transfer. The activity of the wild-type transposase is very low, and is further inhibited by dimerization with the transposase inhibitor (inh). This chain is Transposase for transposon Tn5 (tnpA), found in Escherichia coli.